The following is a 232-amino-acid chain: MARGKIQIKRIENQTNRQVTYSKRRNGLFKKAHELTVLCDARVSIIMFSSSNKLHEYISPNTTTKEIVDLYQTISDVDVWATQYERMQETKRKLLETNRNLRTQIKQRLGECLDELDIQELRRLEDEMENTFKLVRERKFKSLGNQIETTKKKNKSQQDIQKNLIHELELRAEDPHYGLVDNGGDYDSVLGYQIEGSRAYALRFHQNHHHYYPNHGLHAPSASDIITFHLLE.

The MADS-box domain occupies 3–57 (RGKIQIKRIENQTNRQVTYSKRRNGLFKKAHELTVLCDARVSIIMFSSSNKLHEY). The stretch at 75–164 (SDVDVWATQY…KSQQDIQKNL (90 aa)) forms a coiled coil. Residues 84–174 (YERMQETKRK…IHELELRAED (91 aa)) form the K-box domain.

In terms of assembly, forms a heterodimer with PISTILLATA, capable of binding to CArG-box sequences. AP3/PI heterodimer binds AP1 or SEP3 to form complexes. As to expression, expressed in petals and stamens.

Its subcellular location is the nucleus. Functionally, probable transcription factor involved in the genetic control of flower development. Is required for normal development of petals and stamens in the wild-type flower. Forms a heterodimer with PISTILLATA that is required for autoregulation of both AP3 and PI genes. AP3/PI heterodimer interacts with APETALA1 or SEPALLATA3 to form a ternary complex that could be responsible for the regulation of the genes involved in the flower development. AP3/PI heterodimer activates the expression of NAP. AP3/PI prevents GATA22/GNL and GATA21/GNC expression. The sequence is that of Floral homeotic protein APETALA 3 (AP3) from Arabidopsis thaliana (Mouse-ear cress).